Here is a 389-residue protein sequence, read N- to C-terminus: Choline/ethanolaminephosphotransferase 2 (389 aa).

Helical transmembrane passes span 49–69 (MITLMGFMFLLTSALLGYIYS), 141–161 (TFWFWVISAVPFFGATWEHYF), 176–196 (GLALIYCGHFFTAIVGAEWWA), 220–240 (IILFSMIFFAVIPTLAINTSN), 252–272 (MLLALAMLYPLVTLIAGVLIW), 286–306 (HLVVLGTGLAFGFLVGRMILA), 321–338 (MSLLYLPFALANALTARL), and 350–370 (VLLGYCIFTLSLYAHFATSVI).

This sequence belongs to the CDP-alcohol phosphatidyltransferase class-I family. Mg(2+) is required as a cofactor. The cofactor is Mn(2+).

It localises to the membrane. It carries out the reaction CDP-ethanolamine + a 1,2-diacyl-sn-glycerol = a 1,2-diacyl-sn-glycero-3-phosphoethanolamine + CMP + H(+). The catalysed reaction is CDP-choline + a 1,2-diacyl-sn-glycerol = a 1,2-diacyl-sn-glycero-3-phosphocholine + CMP + H(+). The protein operates within phospholipid metabolism; phosphatidylethanolamine biosynthesis; phosphatidylethanolamine from ethanolamine: step 3/3. Its pathway is phospholipid metabolism; phosphatidylcholine biosynthesis; phosphatidylcholine from phosphocholine: step 2/2. Catalyzes both phosphatidylcholine and phosphatidylethanolamine biosynthesis from CDP-choline and CDP-ethanolamine, respectively. Has a higher cholinephosphotransferase activity than ethanolaminephosphotransferase activity. The sequence is that of Choline/ethanolaminephosphotransferase 2 (AAPT2) from Arabidopsis thaliana (Mouse-ear cress).